A 318-amino-acid chain; its full sequence is HPr kinase/phosphorylase (318 aa).

Active-site residues include H146 and K167. 161–168 is an ATP binding site; sequence GESGLGKS. Position 168 (S168) interacts with Mg(2+). The Proton acceptor; for phosphorylation activity. Proton donor; for dephosphorylation activity role is filled by D185. Residues 209 to 218 form an important for the catalytic mechanism of both phosphorylation and dephosphorylation region; the sequence is LEVRGIGLLD. E210 is a Mg(2+) binding site. The active site involves R252. An important for the catalytic mechanism of dephosphorylation region spans residues 273–278; the sequence is QVVAGR.

The protein belongs to the HPrK/P family. Homohexamer. The cofactor is Mg(2+).

It carries out the reaction [HPr protein]-L-serine + ATP = [HPr protein]-O-phospho-L-serine + ADP + H(+). The enzyme catalyses [HPr protein]-O-phospho-L-serine + phosphate + H(+) = [HPr protein]-L-serine + diphosphate. Functionally, catalyzes the ATP- as well as the pyrophosphate-dependent phosphorylation of a specific serine residue in HPr, a phosphocarrier protein of the phosphoenolpyruvate-dependent sugar phosphotransferase system (PTS). HprK/P also catalyzes the pyrophosphate-producing, inorganic phosphate-dependent dephosphorylation (phosphorolysis) of seryl-phosphorylated HPr (P-Ser-HPr). In Acidovorax sp. (strain JS42), this protein is HPr kinase/phosphorylase.